We begin with the raw amino-acid sequence, 100 residues long: Insertion element IS600 uncharacterized 11 kDa protein (100 aa).

This sequence belongs to the transposase 8 family.

This chain is Insertion element IS600 uncharacterized 11 kDa protein, found in Shigella sonnei.